The sequence spans 36 residues: Potassium channel toxin alpha-KTx 23.1 (36 aa).

4 cysteine pairs are disulfide-bonded: C6/C26, C12/C31, C16/C33, and C21/C36. C36 is modified (cysteine amide).

Belongs to the short scorpion toxin superfamily. Potassium channel inhibitor family. Alpha-KTx 23 subfamily. In terms of tissue distribution, expressed by the venom gland.

The protein resides in the secreted. In terms of biological role, voltage-gated potassium channel inhibitor. Selectively and irreversibly binds (K(d)=2.9 pM) and blocks hKv1.3/KCNA3 potassium channels of human T-lymphocytes. Weakly blocks hKCa3.1/KCNN4, mKv1.1/KCNA1, and hKv1.2/KCNA2 channels. In vivo, high doses (200 ug) produce no symptoms of intoxication when injected into mice. The protein is Potassium channel toxin alpha-KTx 23.1 of Vaejovis mexicanus smithi (Mexican scorpion).